A 445-amino-acid chain; its full sequence is tRNA modification GTPase MnmE (445 aa).

Residues R20, E79, and K119 each contribute to the (6S)-5-formyl-5,6,7,8-tetrahydrofolate site. Positions 215–371 (GLKLAIIGPP…ILKNIENIAE (157 aa)) constitute a TrmE-type G domain. N225 lines the K(+) pocket. GTP contacts are provided by residues 225–230 (NAGKSS), 244–250 (SNIAGTT), and 269–272 (DTAG). S229 contacts Mg(2+). K(+)-binding residues include S244, I246, and T249. Residue T250 coordinates Mg(2+). K445 is a (6S)-5-formyl-5,6,7,8-tetrahydrofolate binding site.

The protein belongs to the TRAFAC class TrmE-Era-EngA-EngB-Septin-like GTPase superfamily. TrmE GTPase family. In terms of assembly, homodimer. Heterotetramer of two MnmE and two MnmG subunits. It depends on K(+) as a cofactor.

The protein localises to the cytoplasm. Exhibits a very high intrinsic GTPase hydrolysis rate. Involved in the addition of a carboxymethylaminomethyl (cmnm) group at the wobble position (U34) of certain tRNAs, forming tRNA-cmnm(5)s(2)U34. The polypeptide is tRNA modification GTPase MnmE (Rickettsia canadensis (strain McKiel)).